Consider the following 37-residue polypeptide: Large ribosomal subunit protein bL36 (37 aa).

The protein belongs to the bacterial ribosomal protein bL36 family.

The chain is Large ribosomal subunit protein bL36 from Methylibium petroleiphilum (strain ATCC BAA-1232 / LMG 22953 / PM1).